A 142-amino-acid chain; its full sequence is Cystatin-8 (142 aa).

Positions Met-1 to Arg-21 are cleaved as a signal peptide. N-linked (GlcNAc...) asparagine glycosylation is found at Asn-27 and Asn-39. The short motif at Gln-77–Leu-81 is the Secondary area of contact element. Intrachain disulfides connect Cys-95–Cys-105 and Cys-119–Cys-139.

The protein belongs to the cystatin family. In terms of tissue distribution, proximal caput region of the epididymis. Lower expression in the testis. Within the testis it is localized to the elongating spermatids, whereas within the epididymis it is exclusively synthesized by the proximal caput epithelium.

Its subcellular location is the secreted. In terms of biological role, performs a specialized role during sperm development and maturation. This chain is Cystatin-8 (CST8), found in Homo sapiens (Human).